Reading from the N-terminus, the 436-residue chain is Glutamyl-tRNA reductase (436 aa).

Residues Thr-50–Arg-53, Ser-110, Glu-115–Gln-117, and Gln-121 contribute to the substrate site. The Nucleophile role is filled by Cys-51. Gly-190–Ser-195 contacts NADP(+).

The protein belongs to the glutamyl-tRNA reductase family. In terms of assembly, homodimer.

The enzyme catalyses (S)-4-amino-5-oxopentanoate + tRNA(Glu) + NADP(+) = L-glutamyl-tRNA(Glu) + NADPH + H(+). The protein operates within porphyrin-containing compound metabolism; protoporphyrin-IX biosynthesis; 5-aminolevulinate from L-glutamyl-tRNA(Glu): step 1/2. Functionally, catalyzes the NADPH-dependent reduction of glutamyl-tRNA(Glu) to glutamate 1-semialdehyde (GSA). This Wolinella succinogenes (strain ATCC 29543 / DSM 1740 / CCUG 13145 / JCM 31913 / LMG 7466 / NCTC 11488 / FDC 602W) (Vibrio succinogenes) protein is Glutamyl-tRNA reductase.